The sequence spans 514 residues: Protein Tube (514 aa).

Disordered regions lie at residues 226–250, 255–274, 324–343, 366–385, and 413–514; these read VPQQ…RSSR, TASN…SNTA, LDAG…STST, ASDA…VPDM, and NGAK…ELQQ. A compositionally biased stretch (low complexity) spans 259-274; that stretch reads VAPTTASNAPSASNTA. Residues 422–433 show a composition bias toward polar residues; sequence ADNNSSGTNSLS. The span at 434 to 460 shows a compositional bias: acidic residues; sequence NDDDEQKEDDDDDDDDDVVDVDDEEAD. A compositionally biased stretch (polar residues) spans 477 to 514; it reads TTVTCTSGENSFEFTNDSSSASNDDYTNNIPNLSELQQ.

In terms of tissue distribution, maternal and zygotic gene product.

It is found in the cytoplasm. Its function is as follows. Required for the determination of embryonic dorsoventral polarity. Is involved in transduction of information regulating nuclear import of dorsal protein. The protein is Protein Tube (tub) of Drosophila virilis (Fruit fly).